Consider the following 102-residue polypeptide: NADH-quinone oxidoreductase subunit K (102 aa).

A run of 3 helical transmembrane segments spans residues 5–25 (LAHYLILGAILFAIGIFGIFL), 31–51 (IILLMSIELMLLAVNMNFVAF), and 62–82 (VFVFFILTVAAAEAAIGLAIL).

This sequence belongs to the complex I subunit 4L family. In terms of assembly, NDH-1 is composed of 14 different subunits. Subunits NuoA, H, J, K, L, M, N constitute the membrane sector of the complex.

Its subcellular location is the cell inner membrane. It carries out the reaction a quinone + NADH + 5 H(+)(in) = a quinol + NAD(+) + 4 H(+)(out). Functionally, NDH-1 shuttles electrons from NADH, via FMN and iron-sulfur (Fe-S) centers, to quinones in the respiratory chain. The immediate electron acceptor for the enzyme in this species is believed to be ubiquinone. Couples the redox reaction to proton translocation (for every two electrons transferred, four hydrogen ions are translocated across the cytoplasmic membrane), and thus conserves the redox energy in a proton gradient. This Bordetella avium (strain 197N) protein is NADH-quinone oxidoreductase subunit K.